The sequence spans 525 residues: Exoglucanase 1 (525 aa).

The first 18 residues, 1 to 18 (MRTAKFATLAALVASAAA), serve as a signal peptide directing secretion. Residues 19–467 (QQACSLTTER…AGNGGNNGGN (449 aa)) are catalytic. Glu231 functions as the Nucleophile in the catalytic mechanism. Glu236 (proton donor) is an active-site residue. Asn289 is a glycosylation site (N-linked (GlcNAc...) asparagine). The segment at 454–492 (GLPGAGNGGNNGGNPPPPTTTTSSAPATTTTASAGPKAG) is disordered. Residues 456–465 (PGAGNGGNNG) are compositionally biased toward gly residues. The linker stretch occupies residues 468-489 (PPPPTTTTSSAPATTTTASAGP). The segment covering 473-489 (TTTSSAPATTTTASAGP) has biased composition (low complexity). The CBM1 domain maps to 489-525 (PKAGRWQQCGGIGFTGPTQCEEPYICTKLNDWYSQCL). 2 disulfide bridges follow: Cys497–Cys514 and Cys508–Cys524.

Belongs to the glycosyl hydrolase 7 (cellulase C) family.

The enzyme catalyses Hydrolysis of (1-&gt;4)-beta-D-glucosidic linkages in cellulose and cellotetraose, releasing cellobiose from the non-reducing ends of the chains.. Its function is as follows. The biological conversion of cellulose to glucose generally requires three types of hydrolytic enzymes: (1) Endoglucanases which cut internal beta-1,4-glucosidic bonds; (2) Exocellobiohydrolases that cut the disaccharide cellobiose from the non-reducing end of the cellulose polymer chain; (3) Beta-1,4-glucosidases which hydrolyze the cellobiose and other short cello-oligosaccharides to glucose. In Humicola insolens (Soft-rot fungus), this protein is Exoglucanase 1 (CBH-1).